The following is a 118-amino-acid chain: Beta-2-microglobulin (118 aa).

An N-terminal signal peptide occupies residues M1 to A21. One can recognise an Ig-like C1-type domain in the interval P26–K113. A disulfide bridge connects residues C46 and C101.

Belongs to the beta-2-microglobulin family. Heterodimer of an alpha chain and a beta chain. Beta-2-microglobulin is the beta-chain of major histocompatibility complex class I molecules.

The protein resides in the secreted. Its function is as follows. Component of the class I major histocompatibility complex (MHC). Involved in the presentation of peptide antigens to the immune system. The polypeptide is Beta-2-microglobulin (B2M) (Tachyglossus aculeatus aculeatus (Southeast Australian short-beaked echidna)).